We begin with the raw amino-acid sequence, 490 residues long: UDP-glycosyltransferase 73C7 (490 aa).

Residues S291, 351–353 (APQ), 368–376 (HCGWNSTLE), and 390–393 (FAEQ) each bind UDP-alpha-D-glucose.

The protein belongs to the UDP-glycosyltransferase family.

In Arabidopsis thaliana (Mouse-ear cress), this protein is UDP-glycosyltransferase 73C7 (UGT73C7).